The primary structure comprises 220 residues: Uracil-DNA glycosylase (220 aa).

Asp-65 serves as the catalytic Proton acceptor.

Belongs to the uracil-DNA glycosylase (UDG) superfamily. UNG family.

The protein localises to the cytoplasm. The enzyme catalyses Hydrolyzes single-stranded DNA or mismatched double-stranded DNA and polynucleotides, releasing free uracil.. Excises uracil residues from the DNA which can arise as a result of misincorporation of dUMP residues by DNA polymerase or due to deamination of cytosine. This is Uracil-DNA glycosylase from Phocaeicola vulgatus (strain ATCC 8482 / DSM 1447 / JCM 5826 / CCUG 4940 / NBRC 14291 / NCTC 11154) (Bacteroides vulgatus).